The primary structure comprises 122 residues: Large ribosomal subunit protein uL18 (122 aa).

It belongs to the universal ribosomal protein uL18 family. In terms of assembly, part of the 50S ribosomal subunit; part of the 5S rRNA/L5/L18/L25 subcomplex. Contacts the 5S and 23S rRNAs.

This is one of the proteins that bind and probably mediate the attachment of the 5S RNA into the large ribosomal subunit, where it forms part of the central protuberance. In Heliobacterium modesticaldum (strain ATCC 51547 / Ice1), this protein is Large ribosomal subunit protein uL18.